The sequence spans 215 residues: Urease accessory protein UreG (215 aa).

Position 15 to 22 (15 to 22) interacts with GTP; it reads GPVGSGKT.

The protein belongs to the SIMIBI class G3E GTPase family. UreG subfamily. As to quaternary structure, homodimer. UreD, UreF and UreG form a complex that acts as a GTP-hydrolysis-dependent molecular chaperone, activating the urease apoprotein by helping to assemble the nickel containing metallocenter of UreC. The UreE protein probably delivers the nickel.

It localises to the cytoplasm. Facilitates the functional incorporation of the urease nickel metallocenter. This process requires GTP hydrolysis, probably effectuated by UreG. This chain is Urease accessory protein UreG, found in Alcanivorax borkumensis (strain ATCC 700651 / DSM 11573 / NCIMB 13689 / SK2).